A 427-amino-acid chain; its full sequence is Serine protease HTRA2, mitochondrial (427 aa).

The disordered stretch occupies residues 33-55 (HTASSSKGSGGDNSKDKENNGQN). A helical membrane pass occupies residues 66 to 86 (SAFQFCVPFSLGALVSAVLIE). An IAP-binding motif is present at residues 78 to 81 (ALVS). Residues 144–307 (SNGSGFVIEQ…IPIDYVKVFL (164 aa)) are serine protease. Residues His162, Asp194, and Ser271 each act as charge relay system in the active site. Positions 330-415 (MGITMLTLTP…DLEIVILRGV (86 aa)) constitute a PDZ domain.

It belongs to the peptidase S1C family. Interacts with th/DIAP1 (via BIR 2 domain).

It is found in the mitochondrion intermembrane space. It localises to the mitochondrion membrane. The catalysed reaction is Cleavage of non-polar aliphatic amino-acids at the P1 position, with a preference for Val, Ile and Met. At the P2 and P3 positions, Arg is selected most strongly with a secondary preference for other hydrophilic residues.. Functionally, serine protease that shows proteolytic activity against a non-specific substrate beta-casein. Promotes or induces cell death either by direct binding to and inhibition of BIRC proteins (also called inhibitor of apoptosis proteins, IAPs), leading to an increase in caspase activity, or by a BIRC inhibition-independent, caspase-independent and serine protease activity-dependent mechanism. Can antagonize antiapoptotic activity of th/Diap1 by directly inducing the degradation of th/Diap1. The chain is Serine protease HTRA2, mitochondrial from Drosophila pseudoobscura pseudoobscura (Fruit fly).